Consider the following 290-residue polypeptide: N-acetylmannosamine kinase (290 aa).

Residues 6–13 (ALDIGGTK) and 132–139 (GVGGGIIL) contribute to the ATP site. Histidine 156, cysteine 166, cysteine 168, and cysteine 173 together coordinate Zn(2+).

It belongs to the ROK (NagC/XylR) family. NanK subfamily. In terms of assembly, homodimer.

It carries out the reaction an N-acyl-D-mannosamine + ATP = an N-acyl-D-mannosamine 6-phosphate + ADP + H(+). It participates in amino-sugar metabolism; N-acetylneuraminate degradation; D-fructose 6-phosphate from N-acetylneuraminate: step 2/5. Functionally, catalyzes the phosphorylation of N-acetylmannosamine (ManNAc) to ManNAc-6-P. The chain is N-acetylmannosamine kinase from Yersinia pseudotuberculosis serotype O:3 (strain YPIII).